The following is a 304-amino-acid chain: MAIKHFLQFSDLTLDEFEYVIERTRIIKRKFKNYEPHHPLVDRTLVMVFEKNSTRTRLSFEAGMHQLGGAAIHLATRDSQLGRGEPVEDAAQVMSRMCDIIMIRTFGQDIIERFAANSRVPVINGLTNEHHPCQVLADVFTFIEHRGSIKGKTVAWIGDANNMLYSWLQAAQVFDFHVNVSTPKGYEIDPTLVAADNTHYKLYAAPSDACAGAHLVTTDVWTSMGFEEENAARLKAFDGWIVDAAKMKRAQPDALFMHCLPAHRGEEVAAEVIDGPQSVVWDEAENRLHAQKALLEYLVLGKLS.

Carbamoyl phosphate is bound by residues 53 to 56, glutamine 80, arginine 104, and 131 to 134; these read STRT and HPCQ. L-ornithine is bound by residues asparagine 162, aspartate 219, and 223–224; that span reads SM. Carbamoyl phosphate contacts are provided by residues 259 to 260 and arginine 287; that span reads CL.

It belongs to the aspartate/ornithine carbamoyltransferase superfamily. OTCase family.

It localises to the cytoplasm. It catalyses the reaction carbamoyl phosphate + L-ornithine = L-citrulline + phosphate + H(+). Its pathway is amino-acid biosynthesis; L-arginine biosynthesis; L-arginine from L-ornithine and carbamoyl phosphate: step 1/3. Its function is as follows. Reversibly catalyzes the transfer of the carbamoyl group from carbamoyl phosphate (CP) to the N(epsilon) atom of ornithine (ORN) to produce L-citrulline. This is Ornithine carbamoyltransferase from Herminiimonas arsenicoxydans.